The chain runs to 406 residues: Ubiquitin-like modifier-activating enzyme 5 (406 aa).

ATP-binding residues include Gly82, Asp103, Lys126, Asn149, and Asn183. The Zn(2+) site is built by Cys225 and Cys228. The active-site Glycyl thioester intermediate is the Cys249. Zn(2+) is bound by residues Cys302 and Cys307. Residues 373 to 397 are disordered; that stretch reads EAPSKSTETTSEATTTTTGDETSLD. Over residues 378 to 393 the composition is skewed to low complexity; it reads STETTSEATTTTTGDE.

Belongs to the ubiquitin-activating E1 family. UBA5 subfamily.

Functionally, E1-like enzyme which activates UFM1. This chain is Ubiquitin-like modifier-activating enzyme 5, found in Drosophila willistoni (Fruit fly).